The following is a 196-amino-acid chain: Probable nicotinate-nucleotide adenylyltransferase (196 aa).

This sequence belongs to the NadD family.

The enzyme catalyses nicotinate beta-D-ribonucleotide + ATP + H(+) = deamido-NAD(+) + diphosphate. Its pathway is cofactor biosynthesis; NAD(+) biosynthesis; deamido-NAD(+) from nicotinate D-ribonucleotide: step 1/1. Catalyzes the reversible adenylation of nicotinate mononucleotide (NaMN) to nicotinic acid adenine dinucleotide (NaAD). The protein is Probable nicotinate-nucleotide adenylyltransferase of Caldicellulosiruptor bescii (strain ATCC BAA-1888 / DSM 6725 / KCTC 15123 / Z-1320) (Anaerocellum thermophilum).